Consider the following 399-residue polypeptide: 3-dehydroquinate synthase (399 aa).

The protein belongs to the archaeal-type DHQ synthase family.

It carries out the reaction 2-amino-2,3,7-trideoxy-D-lyxo-hept-6-ulosonate + NAD(+) + H2O = 3-dehydroquinate + NH4(+) + NADH + H(+). Functionally, catalyzes the oxidative deamination and cyclization of 2-amino-3,7-dideoxy-D-threo-hept-6-ulosonic acid (ADH) to yield 3-dehydroquinate (DHQ), which is fed into the canonical shikimic pathway of aromatic amino acid biosynthesis. The chain is 3-dehydroquinate synthase from Haloquadratum walsbyi (strain DSM 16790 / HBSQ001).